Here is a 167-residue protein sequence, read N- to C-terminus: Small ribosomal subunit protein uS5 (167 aa).

One can recognise an S5 DRBM domain in the interval 11 to 74 (LQEKLIAVNR…EKARRNMINV (64 aa)).

It belongs to the universal ribosomal protein uS5 family. As to quaternary structure, part of the 30S ribosomal subunit. Contacts proteins S4 and S8.

In terms of biological role, with S4 and S12 plays an important role in translational accuracy. Located at the back of the 30S subunit body where it stabilizes the conformation of the head with respect to the body. The polypeptide is Small ribosomal subunit protein uS5 (Klebsiella pneumoniae subsp. pneumoniae (strain ATCC 700721 / MGH 78578)).